Consider the following 404-residue polypeptide: Argininosuccinate synthase (404 aa).

Residues 12–20 and Ala-40 each bind ATP; that span reads AYSGGLDTS. L-citrulline is bound by residues Tyr-92 and Ser-97. Gly-122 serves as a coordination point for ATP. Positions 124, 128, and 129 each coordinate L-aspartate. Asn-128 serves as a coordination point for L-citrulline. L-citrulline contacts are provided by Arg-132, Ser-181, Ser-190, Glu-266, and Tyr-278.

It belongs to the argininosuccinate synthase family. Type 1 subfamily. In terms of assembly, homotetramer.

The protein resides in the cytoplasm. The catalysed reaction is L-citrulline + L-aspartate + ATP = 2-(N(omega)-L-arginino)succinate + AMP + diphosphate + H(+). It functions in the pathway amino-acid biosynthesis; L-arginine biosynthesis; L-arginine from L-ornithine and carbamoyl phosphate: step 2/3. In Photorhabdus laumondii subsp. laumondii (strain DSM 15139 / CIP 105565 / TT01) (Photorhabdus luminescens subsp. laumondii), this protein is Argininosuccinate synthase.